We begin with the raw amino-acid sequence, 325 residues long: NADH-quinone oxidoreductase subunit H (325 aa).

A run of 8 helical transmembrane segments spans residues 11-31 (ILLT…CGAF), 81-101 (FIFT…FAIV), 114-134 (IGIL…LFAG), 154-174 (VSYE…AGSF), 186-206 (MWNI…GVAV), 237-257 (FFVG…TLFF), 265-285 (LPSF…FILI), and 304-324 (ICLP…LYNA).

This sequence belongs to the complex I subunit 1 family. In terms of assembly, NDH-1 is composed of 13 different subunits. Subunits NuoA, H, J, K, L, M, N constitute the membrane sector of the complex.

It localises to the cell inner membrane. It catalyses the reaction a quinone + NADH + 5 H(+)(in) = a quinol + NAD(+) + 4 H(+)(out). NDH-1 shuttles electrons from NADH, via FMN and iron-sulfur (Fe-S) centers, to quinones in the respiratory chain. The immediate electron acceptor for the enzyme in this species is believed to be ubiquinone. Couples the redox reaction to proton translocation (for every two electrons transferred, four hydrogen ions are translocated across the cytoplasmic membrane), and thus conserves the redox energy in a proton gradient. This subunit may bind ubiquinone. In Proteus mirabilis (strain HI4320), this protein is NADH-quinone oxidoreductase subunit H.